A 411-amino-acid polypeptide reads, in one-letter code: Phospholipase ABHD3 (411 aa).

A helical; Signal-anchor for type II membrane protein transmembrane segment spans residues 25 to 45 (VGFFGSGVGLSLILGFSVAYA). An AB hydrolase-1 domain is found at 140-233 (PTILLLPGLT…MLLLNYLGKI (94 aa)). Active-site charge relay system residues include serine 220, aspartate 346, and histidine 375.

Belongs to the AB hydrolase superfamily. AB hydrolase 4 family. As to expression, widely expressed with higher expression in liver.

It is found in the membrane. It catalyses the reaction a 1,2-diacyl-sn-glycero-3-phosphocholine + H2O = a 1-acyl-sn-glycero-3-phosphocholine + a fatty acid + H(+). The enzyme catalyses a 1,2-diacyl-sn-glycero-3-phosphocholine + H2O = a 2-acyl-sn-glycero-3-phosphocholine + a fatty acid + H(+). The catalysed reaction is 1-tetradecanoyl-2-(9Z,12Z-octadecadienoyl)-sn-glycero-3-phosphocholine + H2O = 2-(9Z,12Z-octadecadienoyl)-sn-glycero-3-phosphocholine + tetradecanoate + H(+). It carries out the reaction 1-tetradecanoyl-2-(9Z,12Z-octadecadienoyl)-sn-glycero-3-phosphocholine + H2O = 1-tetradecanoyl-sn-glycero-3-phosphocholine + (9Z,12Z)-octadecadienoate + H(+). It catalyses the reaction 1-tetradecanoyl-2-(5Z,8Z,11Z,14Z-eicosatetraenoyl)-sn-glycero-3-phosphocholine + H2O = 2-(5Z,8Z,11Z,14Z)-eicosatetraenoyl-sn-glycero-3-phosphocholine + tetradecanoate + H(+). The enzyme catalyses 1-tetradecanoyl-2-(4Z,7Z,10Z,13Z,16Z,19Z-docosahexaenoyl)-sn-glycero-3-phosphocholine + H2O = 2-(4Z,7Z,10Z,13Z,16Z,19Z-docosahexaenoyl)-sn-glycero-3-phosphocholine + tetradecanoate + H(+). The catalysed reaction is 1,2-ditetradecanoyl-sn-glycero-3-phosphocholine + H2O = 2-tetradecanoyl-sn-glycero-3-phosphocholine + tetradecanoate + H(+). It carries out the reaction 1-octadecanoyl-2-acetyl-sn-glycero-3-phosphocholine + H2O = 1-octadecanoyl-sn-glycero-3-phosphocholine + acetate + H(+). It catalyses the reaction 1,2-ditetradecanoyl-sn-glycero-3-phosphocholine + H2O = 1-tetradecanoyl-sn-glycero-3-phosphocholine + tetradecanoate + H(+). The enzyme catalyses 1-octadecanoyl-2-pentanoyl-sn-glycero-3-phosphocholine + H2O = pentanoate + 1-octadecanoyl-sn-glycero-3-phosphocholine + H(+). The catalysed reaction is 1-octadecanoyl-2-hexanoyl-sn-glycero-3-phosphocholine + H2O = hexanoate + 1-octadecanoyl-sn-glycero-3-phosphocholine + H(+). It carries out the reaction 1-octadecanoyl-2-octanoyl-sn-glycero-3-phosphocholine + H2O = 1-octadecanoyl-sn-glycero-3-phosphocholine + octanoate + H(+). It catalyses the reaction 1-octadecanoyl-2-nonanoyl-sn-glycero-3-phosphocholine + H2O = nonanoate + 1-octadecanoyl-sn-glycero-3-phosphocholine + H(+). The enzyme catalyses 1-O-hexadecyl-2-nonadioyl-sn-glycero-3-phosphocholine + H2O = nonanedioate + 1-O-hexadecyl-sn-glycero-3-phosphocholine + H(+). The catalysed reaction is 1-hexadecanoyl-2-nonadioyl-sn-glycero-3-phosphocholine + H2O = nonanedioate + 1-hexadecanoyl-sn-glycero-3-phosphocholine + H(+). It carries out the reaction 1-hexadecanoyl-2-(9-oxononanoyl)-sn-glycero-3-phosphocholine + H2O = 9-oxononanoate + 1-hexadecanoyl-sn-glycero-3-phosphocholine + H(+). It catalyses the reaction 1-hexadecanoyl-2-(5-oxopentanoyl)-sn-glycero-3-phosphocholine + H2O = 5-oxopentanoate + 1-hexadecanoyl-sn-glycero-3-phosphocholine + H(+). The enzyme catalyses 1-hexadecanoyl-2-glutaroyl-sn-glycero-3-phosphocholine + H2O = glutarate + 1-hexadecanoyl-sn-glycero-3-phosphocholine + H(+). The catalysed reaction is 1-O-hexadecyl-2-acetyl-sn-glycero-3-phosphocholine + H2O = 1-O-hexadecyl-sn-glycero-3-phosphocholine + acetate + H(+). Functionally, phospholipase that may play a role in phospholipids remodeling. May selectively cleave myristate (C14)-containing phosphatidylcholines through its predominant phospholipase 1 activity, cleaving preferentially acyl groups in sn1 position. In parallel, may have a minor phospholipase 2 activity acting on acyl groups in position sn2. In addition to (C14)-containing phosphatidylcholines, may also act on other medium-chain-containing and oxidatively truncated phospholipids. The chain is Phospholipase ABHD3 from Mus musculus (Mouse).